Reading from the N-terminus, the 455-residue chain is Rhodopsin (455 aa).

Residues 1–34 lie on the Extracellular side of the membrane; the sequence is MVESTTLVNQTWWYNPTVDIHPHWAKFDPIPDAV. A glycan (N-linked (GlcNAc...) asparagine) is linked at asparagine 9. Residues 35–59 traverse the membrane as a helical segment; it reads YYSVGIFIGVVGIIGILGNGVVIYL. Over 60–71 the chain is Cytoplasmic; that stretch reads FSKTKSLQTPAN. A helical transmembrane segment spans residues 72–98; that stretch reads MFIINLAMSDLSFSAINGFPLKTISAF. The Extracellular segment spans residues 99 to 110; sequence MKKWIFGKVACQ. Cysteine 109 and cysteine 187 are disulfide-bonded. Residues 111-132 traverse the membrane as a helical segment; it reads LYGLLGGIFGFMSINTMAMISI. A 'Ionic lock' involved in activated form stabilization motif is present at residues 133-135; it reads DRY. The Cytoplasmic segment spans residues 133–152; it reads DRYNVIGRPMAASKKMSHRR. A helical membrane pass occupies residues 153 to 173; the sequence is AFLMIIFVWMWSIVWSVGPVF. The Extracellular portion of the chain corresponds to 174 to 200; it reads NWGAYVPEGILTSCSFDYLSTDPSTRS. Residues 201 to 225 traverse the membrane as a helical segment; sequence FILCMYFCGFMLPIIIIAFCYFNIV. Over 226-262 the chain is Cytoplasmic; sequence MSVSNHEKEMAAMAKRLNAKELRKAQAGASAEMKLAK. A helical membrane pass occupies residues 263–284; that stretch reads ISMVIITQFMLSWSPYAIIALL. The Extracellular portion of the chain corresponds to 285-294; that stretch reads AQFGPAEWVT. A helical transmembrane segment spans residues 295–316; it reads PYAAELPVLFAKASAIHNPIVY. Lysine 306 bears the N6-(retinylidene)lysine mark. At 317 to 455 the chain is on the cytoplasmic side; sequence SVSHPKFREA…QGVDNQAYQA (139 aa). S-palmitoyl cysteine attachment occurs at residues cysteine 337 and cysteine 338. Residues 378–387 are compositionally biased toward low complexity; the sequence is QKMQAQQAAY. Residues 378–455 form a disordered region; that stretch reads QKMQAQQAAY…QGVDNQAYQA (78 aa). Pro residues predominate over residues 388–433; that stretch reads QPPPPPQGYPPQGYPPQGAYPPPQGYPPQGYPPQGYPPQGYPPQGA. Repeat copies occupy residues 395 to 399, 400 to 404, 412 to 416, 417 to 421, 422 to 426, and 427 to 431. The 6 X 5 AA repeats of G-Y-P-P-Q stretch occupies residues 395-431; sequence GYPPQGYPPQGAYPPPQGYPPQGYPPQGYPPQGYPPQ.

This sequence belongs to the G-protein coupled receptor 1 family. Opsin subfamily. In terms of processing, contains one covalently linked retinal chromophore. Upon light absorption, the covalently bound 11-cis-retinal is converted to all-trans-retinal. After hydrolysis of the Schiff base and release of the covalently bound all-trans-retinal, active rhodopsin is regenerated by binding of a fresh molecule of 11-cis-retinal.

The protein resides in the cell projection. The protein localises to the rhabdomere membrane. Photoreceptor required for image-forming vision at low light intensity. Light-induced isomerization of 11-cis to all-trans retinal triggers a conformational change that activates signaling via G-proteins. Signaling mediates the activation of phospholipase C. Subsequent receptor phosphorylation mediates displacement of the bound G-protein alpha subunit by arrestin and terminates signaling. This Enteroctopus dofleini (North Pacific giant octopus) protein is Rhodopsin (RHO).